Consider the following 212-residue polypeptide: Urease accessory protein UreG (212 aa).

19–26 (GPVGSGKT) is a GTP binding site.

The protein belongs to the SIMIBI class G3E GTPase family. UreG subfamily. As to quaternary structure, homodimer. UreD, UreF and UreG form a complex that acts as a GTP-hydrolysis-dependent molecular chaperone, activating the urease apoprotein by helping to assemble the nickel containing metallocenter of UreC. The UreE protein probably delivers the nickel.

It is found in the cytoplasm. In terms of biological role, facilitates the functional incorporation of the urease nickel metallocenter. This process requires GTP hydrolysis, probably effectuated by UreG. The polypeptide is Urease accessory protein UreG (Vibrio parahaemolyticus).